The chain runs to 138 residues: Class I hydrophobin 3 (138 aa).

An N-terminal signal peptide occupies residues 1 to 16 (MRFFLAITALVAAVTA). 4 disulfides stabilise this stretch: Cys-40–Cys-111, Cys-48–Cys-105, Cys-49–Cys-87, and Cys-112–Cys-130.

Belongs to the fungal hydrophobin family. In terms of assembly, self-assembles to form functional amyloid fibrils called rodlets. Self-assembly into fibrillar rodlets occurs spontaneously at hydrophobic:hydrophilic interfaces and the rodlets further associate laterally to form amphipathic monolayers.

Its subcellular location is the secreted. The protein resides in the cell wall. Functionally, aerial growth, conidiation, and dispersal of filamentous fungi in the environment rely upon a capability of their secreting small amphipathic proteins called hydrophobins (HPBs) with low sequence identity. Class I can self-assemble into an outermost layer of rodlet bundles on aerial cell surfaces, conferring cellular hydrophobicity that supports fungal growth, development and dispersal; whereas Class II form highly ordered films at water-air interfaces through intermolecular interactions but contribute nothing to the rodlet structure. HYD3 is a class I hydrophobin that contributes to the formation of aerial hyphae and fruiting bodies. This chain is Class I hydrophobin 3, found in Cordyceps militaris (Caterpillar fungus).